A 144-amino-acid chain; its full sequence is Intraflagellar transport protein 25 homolog (144 aa).

Asparagine 29, aspartate 32, and threonine 37 together coordinate Ca(2+).

This sequence belongs to the IFT25 family. Component of the IFT complex B, at least composed of IFT20, IFT22, IFT25, IFT27, IFT46, IFT52, TRAF3IP1/IFT54, IFT57, IFT74, IFT80, IFT81, and IFT88. Interacts with IFT27. Interacts with IFT88. As to expression, detected in placenta.

The protein localises to the cell projection. It is found in the cilium. Functionally, component of the IFT complex B required for sonic hedgehog/SHH signaling. May mediate transport of SHH components: required for the export of SMO and PTCH1 receptors out of the cilium and the accumulation of GLI2 at the ciliary tip in response to activation of the SHH pathway, suggesting it is involved in the dynamic transport of SHH signaling molecules within the cilium. Not required for ciliary assembly. Its role in intraflagellar transport is mainly seen in tissues rich in ciliated cells such as kidney and testis. Essential for male fertility, spermiogenesis and sperm flagella formation. Plays a role in the early development of the kidney. May be involved in the regulation of ureteric bud initiation. This is Intraflagellar transport protein 25 homolog from Homo sapiens (Human).